A 610-amino-acid polypeptide reads, in one-letter code: UvrABC system protein C (610 aa).

In terms of domain architecture, GIY-YIG spans 16–94; sequence NQPGVYRMYN…IKQYLPKYNV (79 aa). The region spanning 204–239 is the UVR domain; it reads NQVLSILVEKMEQASRELRFEDAAKARDQIQAIRRV.

It belongs to the UvrC family. Interacts with UvrB in an incision complex.

The protein resides in the cytoplasm. Functionally, the UvrABC repair system catalyzes the recognition and processing of DNA lesions. UvrC both incises the 5' and 3' sides of the lesion. The N-terminal half is responsible for the 3' incision and the C-terminal half is responsible for the 5' incision. The chain is UvrABC system protein C from Vibrio cholerae serotype O1 (strain ATCC 39315 / El Tor Inaba N16961).